The sequence spans 979 residues: Receptor-type tyrosine-protein phosphatase-like N (979 aa).

The signal sequence occupies residues 1–34 (MRLPGRPGGPGGSGGLRVLLCLLLLGSRPGGCNA). An RESP18 homology domain region spans residues 35 to 131 (ISAHGCLFDR…HPRDRSGLVP (97 aa)). Residues 35-575 (ISAHGCLFDR…RPAHSTSPMR (541 aa)) are Lumenal-facing. C53 and C62 are joined by a disulfide. Over residues 113–127 (IPRLRPPEPHPRDRS) the composition is skewed to basic and acidic residues. 4 disordered regions span residues 113–171 (IPRL…GAGS), 248–272 (GSKG…PAQL), 285–332 (SQVP…EQPD), and 391–466 (EQVQ…STRP). Phosphoserine is present on residues S308 and S309. Pro residues predominate over residues 400–409 (EPPPPMPSLP). A sufficient for dimerization of proICA512 region spans residues 449-575 (SPLGQNQPTM…RPAHSTSPMR (127 aa)). Positions 451 to 466 (LGQNQPTMAGQPSTRP) are enriched in polar residues. N506 and N524 each carry an N-linked (GlcNAc...) asparagine glycan. The helical transmembrane segment at 576-600 (SVLLTLVALAGVAGLLVALAVALCV) threads the bilayer. The interval 601-732 (RQHARQRDKE…PNTCATAQGE (132 aa)) is sufficient for dimerization of proICA512. The Cytoplasmic portion of the chain corresponds to 601 to 979 (RQHARQRDKE…VNAILKALPQ (379 aa)). The segment at 643–680 (NRAEGPPEPSRVSSVSSQFSDAAQASPSSHSSTPSWCE) is disordered. Over residues 652 to 677 (SRVSSVSSQFSDAAQASPSSHSSTPS) the composition is skewed to low complexity. A Tyrosine-protein phosphatase domain is found at 709–969 (LAKEWQALCA…EFALTAVAEE (261 aa)). K754 is covalently cross-linked (Glycyl lysine isopeptide (Lys-Gly) (interchain with G-Cter in SUMO)).

It belongs to the protein-tyrosine phosphatase family. Receptor class 8 subfamily. In terms of assembly, homodimer; shown for the unprocessed protein (proICA512) in the endoplasmic reticulum and resolved during protein maturation as ICA512-TMF seems to be predominantly monomeric in secretory granules; however, ICA512-CCF interacts with ICA512-TMF disrupting the ICA512-TMF:SNTB2 complex. The isolated lumenal RESP18 homology domain has been shown to form disulfide-linked homooligomers. Interacts (via cytoplasmic domain) with phosphorylated SNTB2; this protects PTPRN against cleavage by CAPN1 to produce ICA512-CCF. Dephosphorylation of SNTB2 upon insulin stimulation disrupts the interaction and results in PTPRN cleavage. Interacts with SNX19. ICA512-CCF interacts with PIAS4; in the nucleus. Interacts with STAT5B (phosphorylated); down-regulated by ICA512-CCF sumoylation; ICA512-CCF prevents STAT5B dephosphorylation; ICA512-CCF mediates interaction of STAT5B with PIAS4. Interacts (via RESP18 homology domain) with insulin and proinsulin. Interacts with PTPRN2, PTPRA and PTPRE. Post-translationally, N-glycosylated. O-glycosylated. In terms of processing, subject to proteolytic cleavage at multiple sites. Subject to cleavage on a pair of basic residues. On exocytosis of secretory granules in pancreatic beta-cells ICA512-TMF is transiently inserted in the plasma-membrane and cleaved by mu-type calpain CPN1 to yield ICA512-CCF. Post-translationally, sumoylated at two sites including Lys-754. Sumoylation decreases interaction with STAT5. Detected in pituitary (at protein level).

Its subcellular location is the membrane. The protein localises to the cytoplasmic vesicle. The protein resides in the secretory vesicle membrane. It localises to the perikaryon. It is found in the cell projection. Its subcellular location is the axon. The protein localises to the synapse. The protein resides in the cell membrane. It localises to the endosome. It is found in the nucleus. Plays a role in vesicle-mediated secretory processes. Required for normal accumulation of secretory vesicles in hippocampus, pituitary and pancreatic islets. Required for the accumulation of normal levels of insulin-containing vesicles and preventing their degradation. Plays a role in insulin secretion in response to glucose stimuli. Required for normal accumulation of the neurotransmitters norepinephrine, dopamine and serotonin in the brain. In females, but not in males, required for normal accumulation and secretion of pituitary hormones, such as luteinizing hormone (LH) and follicle-stimulating hormone (FSH). Required to maintain normal levels of renin expression and renin release. Seems to lack intrinsic enzyme activity. May regulate catalytic active protein-tyrosine phosphatases such as PTPRA through dimerization. In terms of biological role, ICA512-TMF regulates dynamics and exocytosis of insulin secretory granules (SGs); binding of ICA512-TMF to SNTB2/beta-2-syntrophin is proposed to restrain SGs mobility and exocytosis by tethering them to the actin cytoskeleton depending on UTRN; the function is inhibited by cytoplasmic ICA512-CFF dimerizing with ICA512-TMF and displacing SNTB2. Its function is as follows. ICA512-CCF translocated to the nucleus promotes expression of insulin and other granule-related genes; the function implicates binding to and regulating activity of STAT5B probably by preventing its dephosphorylation and potentially by inducing its sumoylation by recruiting PIAS4. Enhances pancreatic beta-cell proliferation by converging with signaling by STAT5B and STAT3. ICA512-CCF located in the cytoplasm regulates dynamics and exocytosis of insulin secretory granules (SGs) by dimerizing with ICA512-TMF and displacing SNTB2 thus enhancing SGs mobility and exocytosis. The polypeptide is Receptor-type tyrosine-protein phosphatase-like N (PTPRN) (Bos taurus (Bovine)).